The following is a 1077-amino-acid chain: Adenylate cyclase type 4 (1077 aa).

Over 1 to 28 (MARLFSPRPPPSEDLFYETYYSLSQQYP) the chain is Cytoplasmic. A run of 6 helical transmembrane segments spans residues 29–50 (LLILLLVIVLCALVALPAVAWA), 61–80 (FLTTVLCALGGFSLLLGLAS), 94–117 (GLIWVALLALGYGFLFTGGVVSAW), 120–138 (VSFFLFIIFTVYAMLPLGM), 141–162 (AAAAGVISSLSHLLVLGLYLGW), and 170–190 (LLPQLAANAVLFLCGNVVGAY). Residues 191–582 (HKALMERALR…YRLSALPAFK (392 aa)) lie on the Cytoplasmic side of the membrane. Mg(2+)-binding residues include D278, I279, and D322. ATP-binding positions include 278–283 (DIVGFT), 320–322 (LGD), and R366. The disordered stretch occupies residues 503–524 (TSTPLPEKAFSPQWSLDRSRTP). Residue S517 is modified to Phosphoserine. T533 carries the post-translational modification Phosphothreonine. A run of 3 helical transmembrane segments spans residues 583–604 (YYAACTFLVFLSNFTIQMLVTT), 608–630 (ALIITYSITFLLFFLLLFVCFSE), and 661–684 (VALGTATILLVFTMAIASLLFLPV). At 685–717 (SSDCLFLASNVSSVTFNASWEMPGSLPLISIPL) the chain is on the extracellular side. N-linked (GlcNAc...) asparagine glycosylation is found at N694 and N701. The next 3 membrane-spanning stretches (helical) occupy residues 718–738 (ISIPYSMHCCVLGFLSCSLFL), 746–766 (LLLLLLWLVASCSLFLHSHAW), and 793–809 (MGAIYFFIFFFTLLVLA). The Cytoplasmic portion of the chain corresponds to 810–1077 (RQNEYYCRLD…LTRTGSPSAS (268 aa)). ATP-binding positions include K927, 1007–1009 (DIW), 1014–1018 (NVASR), and K1054.

This sequence belongs to the adenylyl cyclase class-4/guanylyl cyclase family. It depends on Mg(2+) as a cofactor. The cofactor is Mn(2+).

It is found in the cell membrane. The protein resides in the cytoplasm. The enzyme catalyses ATP = 3',5'-cyclic AMP + diphosphate. Activated by forskolin. Insensitive to calcium/calmodulin. Stimulated by GNAS and by the G-protein beta and gamma subunit complex. In terms of biological role, catalyzes the formation of the signaling molecule cAMP in response to G-protein signaling. This is Adenylate cyclase type 4 (Adcy4) from Mus musculus (Mouse).